A 760-amino-acid chain; its full sequence is Armadillo-like helical domain-containing protein 4 (760 aa).

Positions 1–27 (MSRPIVLHICLAFCSLLLLNFAAQCLA) are cleaved as a signal peptide. Residues 28-700 (FPNLERREIV…KDKAGYMSGM (673 aa)) are Extracellular-facing. 6 disordered regions span residues 49 to 69 (LNTDDLENDSVTSNTPVSGDP), 117 to 143 (GEEVFGSSQPERMSPESRPSKATLTNP), 216 to 243 (RTEKFEANPEHKTTSFPGSKLTAGTEPS), 373 to 392 (HGGERASDQSSVTPTSPMGD), 474 to 495 (TRGEDETKGGRELPSATVDAPR), and 536 to 652 (NEEL…SQEP). A glycan (N-linked (GlcNAc...) asparagine) is linked at Asn-56. The span at 216 to 228 (RTEKFEANPEHKT) shows a compositional bias: basic and acidic residues. The segment covering 380–390 (DQSSVTPTSPM) has biased composition (polar residues). Residues 474–484 (TRGEDETKGGR) show a composition bias toward basic and acidic residues. Acidic residues predominate over residues 594 to 635 (LESEEGEDDEDEEDEEEEDEEEEDEEEDEEDKDADSLDEALG). The chain crosses the membrane as a helical span at residues 701 to 721 (LVPVGVGIAGALFILGALYSI). Over 722 to 760 (KVMNRRRRNGFKRHKRKQREFNSMQDRVMLLADSSEDEF) the chain is Cytoplasmic. Ser-755 and Ser-756 each carry phosphoserine.

In terms of assembly, interacts with IL6ST; this interaction prevents IL6ST protein homodimerization and bridges ARMH4 with IL6R and STAT3 and therefore inhibits phosphorylation of STAT3 at 'Tyr-705'. Interacts (via cytoplasmic tail) with RICTOR; this interaction bridges ARMH4 to the mTORC2 complex and inhibits the mTORC2 kinase activity.

It is found in the membrane. May modulate immune response and may play a role in inflammation. Down-modulates STAT3 signaling throught direct interaction with IL6ST, resulting in the inhibition of phosphorylation of STAT3 at Tyr-705. May negatively regulates AKT signaling by modulating the activity of mTORC2 complex through RICTOR interaction. This is Armadillo-like helical domain-containing protein 4 from Bos taurus (Bovine).